The sequence spans 256 residues: Cytoplasmic envelopment protein 1 (256 aa).

Belongs to the herpesviridae cytoplasmic envelopment protein 1 family.

It is found in the virion. The protein localises to the virion tegument. It localises to the host cytoplasm. The protein resides in the host Golgi apparatus. Its function is as follows. Plays a critical role in cytoplasmic virus egress. Participates in the final step of tegumentation and envelope acquisition within the host cytoplasm. The chain is Cytoplasmic envelopment protein 1 (U75) from Homo sapiens (Human).